We begin with the raw amino-acid sequence, 1170 residues long: Anion exchange protein 3 (1170 aa).

Residues 1-656 (MGRSYNEKDF…DLKDALDTQC (656 aa)) are Cytoplasmic-facing. Disordered stretches follow at residues 17-96 (FHHT…PQLS), 112-167 (FHME…TTRG), and 239-267 (HLVK…RRKR). A compositionally biased stretch (basic residues) spans 32 to 53 (RFRKRVLSMDRRRKRKRKKKKT). A compositionally biased stretch (acidic residues) spans 67-76 (VDEEEAESEI). Residues 246–259 (RCQLPRSSNGSPPL) are compositionally biased toward polar residues. Transmembrane regions (helical) follow at residues 657 to 677 (IAAV…FGGL), 702 to 722 (FSLL…LLVF), 744 to 764 (IGFW…SFLV), 774 to 794 (IFAF…LIKV), and 828 to 848 (PNTA…AFFL). The tract at residues 657–1170 (IAAVIFIYFA…DEYNEIHMLV (514 aa)) is membrane (anion exchange). The Cytoplasmic portion of the chain corresponds to 849–863 (RKLRNSRFLGGKVRR). 5 helical membrane-spanning segments follow: residues 864–884 (VIGD…DILI), 919–939 (FPVW…ILIF), 966–986 (LLLI…WLTA), 1020–1063 (RVTG…LTGI), and 1104–1124 (IVLL…FILI).

Belongs to the anion exchanger (TC 2.A.31) family. Widely expressed at low levels.

It localises to the cell membrane. The enzyme catalyses hydrogencarbonate(in) + chloride(out) = hydrogencarbonate(out) + chloride(in). Its function is as follows. Sodium-independent anion exchanger which mediates the electroneutral exchange of chloride for bicarbonate ions across the cell membrane. May be involved in the regulation of intracellular pH, and the modulation of cardiac action potential. The protein is Anion exchange protein 3 of Danio rerio (Zebrafish).